The following is an 81-amino-acid chain: Putative defensin-like protein 25 (81 aa).

The first 23 residues, 1-23 (MASLKVFSFALILVLTFSVDVEG), serve as a signal peptide directing secretion. Intrachain disulfides connect Cys33–Cys81, Cys43–Cys68, Cys52–Cys77, and Cys56–Cys79.

Belongs to the DEFL family.

The protein resides in the secreted. The polypeptide is Putative defensin-like protein 25 (Arabidopsis thaliana (Mouse-ear cress)).